Consider the following 758-residue polypeptide: MAEPRQEFEVMEDHAGTYGLGDRKDQGGYTMHQDQEGDTDAGLKESPLQTPTEDGSEEPGSETSDAKSTPTAEDVTAPLVDEGAPGKQAAAQPHTEIPEGTTAEEAGIGDTPSLEDEAAGHVTQEPESGKVVQEGFLREPGPPGLSHQLMSGMPGAPLLPEGPREATRQPSGTGPEDTEGGRHAPELLKHQLLGDLHQEGPPLKGAGGKERPGSKEEVDEDRDVDESSPQDSPPSKASPAQDGRPPQTAAREATSIPGFPAEGAIPLPVDFLSKVSTEIPASEPDGPSVGRAKGQDAPLEFTFHVEITPNVQKEQAHSEEHLGRAAFPGAPGEGPEARGPSLGEDTKEADLPEPSEKQPAAAPRGKPVSRVPQLKARMVSKSKDGTGSDDKKAKTSTRSSAKTLKNRPCLSPKHPTPGSSDPLIQPSSPAVCPEPPSSPKYVSSVTSRTGSSGAKEMKLKGADGKTKIATPRGAAPPGQKGQANATRIPAKTPPAPKTPPSSGEPPKSGDRSGYSSPGSPGTPGSRSRTPSLPTPPTREPKKVAVVRTPPKSPSSAKSRLQTAPVPMPDLKNVKSKIGSTENLKHQPGGGKVQIINKKLDLSNVQSKCGSKDNIKHVPGGGSVQIVYKPVDLSKVTSKCGSLGNIHHKPGGGQVEVKSEKLDFKDRVQSKIGSLDNITHVPGGGNKKIETHKLTFRENAKAKTDHGAEIVYKSPVVSGDTSPRHLSNVSSTGSIDMVDSPQLATLADEVSASLAKQGL.

Over residues 1–26 the composition is skewed to basic and acidic residues; the sequence is MAEPRQEFEVMEDHAGTYGLGDRKDQ. The tract at residues 1-573 is disordered; that stretch reads MAEPRQEFEV…PVPMPDLKNV (573 aa). At Ala2 the chain carries N-acetylalanine. Tyr18 is modified (phosphotyrosine; by FYN). The residue at position 29 (Tyr29) is a Phosphotyrosine. Lys44 is covalently cross-linked (Glycyl lysine isopeptide (Lys-Gly) (interchain with G-Cter in ubiquitin)). Phosphoserine is present on residues Ser46 and Ser61. The span at 61 to 71 shows a compositional bias: polar residues; it reads SETSDAKSTPT. 2 positions are modified to phosphothreonine: Thr69 and Thr71. A glycan (N-linked (Glc) (glycation) lysine; in PHF-tau; in vitro) is linked at Lys87. At Thr111 the chain carries Phosphothreonine. Composition is skewed to basic and acidic residues over residues 179 to 189 and 207 to 216; these read EGGRHAPELLK and GGKERPGSKE. Ser214 is subject to Phosphoserine; by SGK1. Residues 217-228 are compositionally biased toward acidic residues; it reads EVDEDRDVDESS. Residues 314–323 are compositionally biased toward basic and acidic residues; sequence EQAHSEEHLG. The span at 324-340 shows a compositional bias: low complexity; that stretch reads RAAFPGAPGEGPEARGP. Composition is skewed to basic and acidic residues over residues 344–356 and 381–393; these read EDTK…EPSE and KSKD…DKKA. N-linked (Glc) (glycation) lysine; in PHF-tau; in vitro glycosylation is present at Lys383. The segment covering 442 to 453 has biased composition (low complexity); sequence VSSVTSRTGSSG. A compositionally biased stretch (basic and acidic residues) spans 455–466; it reads KEMKLKGADGKT. Residue Lys467 is glycosylated (N-linked (Glc) (glycation) lysine; in PHF-tau; in vitro). Position 470 is a phosphothreonine; by PDPK1 (Thr470). Arg472 bears the Omega-N-methylarginine mark. N-linked (Glc) (glycation) lysine; in PHF-tau; in vitro glycosylation occurs at Lys480. Lys480 carries the N6,N6-dimethyllysine; alternate modification. The residue at position 480 (Lys480) is an N6-acetyllysine; alternate. Asn484 carries the post-translational modification Deamidated asparagine; in tau and PHF-tau; partial. The residue at position 486 (Thr486) is a Phosphothreonine. The N-linked (Glc) (glycation) lysine; in PHF-tau; in vitro glycan is linked to Lys491. Over residues 491–503 the composition is skewed to pro residues; the sequence is KTPPAPKTPPSSG. Thr492 carries the phosphothreonine modification. Residue Thr498 is modified to Phosphothreonine; by PDPK1. Ser502, Ser508, and Ser512 each carry phosphoserine. Residues 504-531 show a composition bias toward low complexity; sequence EPPKSGDRSGYSSPGSPGTPGSRSRTPS. Tyr514 carries the phosphotyrosine; by TTBK1 modification. Residues Ser515 and Ser516 each carry the phosphoserine; by PDPK1 and TTBK1 modification. Ser519 bears the Phosphoserine; by CK1, PDPK1 and TTBK1 mark. Thr522 carries the post-translational modification Phosphothreonine; by CK1 and PDPK1. A glycan (O-linked (GlcNAc) serine) is linked at Ser525. The residue at position 529 (Thr529) is a Phosphothreonine; by BRSK1, BRSK2, DYRK2 and PDPK1. Ser531 is subject to Phosphoserine; by PKA. Thr534 is modified (phosphothreonine; by PDPK1). Residue Lys542 is glycosylated (N-linked (Glc) (glycation) lysine; in PHF-tau; in vitro). An N6-acetyllysine modification is found at Lys542. Phosphothreonine; by GSK3-beta and PDPK1 is present on Thr548. Lys551 carries N-linked (Glc) (glycation) lysine; in PHF-tau; in vitro glycosylation. A Phosphoserine; by PDPK1 modification is found at Ser552. The residue at position 554 (Ser554) is a Phosphoserine; by PHK. Ser555 carries an O-linked (GlcNAc) serine glycan. Tau/MAP repeat units follow at residues 561–591, 592–622, 623–653, and 654–685; these read QTAP…GGGK, VQII…GGGS, VQIV…GGGQ, and VEVK…GGGN. Residues 561 to 685 are microtubule-binding domain; that stretch reads QTAPVPMPDL…NITHVPGGGN (125 aa). Lys571 participates in a covalent cross-link: Glycyl lysine isopeptide (Lys-Gly) (interchain with G-Cter in ubiquitin); in PHF-tau. N-linked (Glc) (glycation) lysine; in PHF-tau; in vitro glycosylation occurs at Lys576. N6-acetyllysine; alternate is present on Lys576. Lys576 is modified (N6-methyllysine; alternate). Residue Lys576 forms a Glycyl lysine isopeptide (Lys-Gly) (interchain with G-Cter in ubiquitin); alternate linkage. Ser579 bears the Phosphoserine; by MARK1, MARK2, MARK3, MARK4, BRSK1, BRSK2 and PHK mark. A Glycyl lysine isopeptide (Lys-Gly) (interchain with G-Cter in ubiquitin) cross-link involves residue Lys584. Residue Asn596 is modified to Deamidated asparagine; in tau and PHF-tau; partial. Residues Lys597 and Lys598 are each glycosylated (N-linked (Glc) (glycation) lysine; in PHF-tau; in vitro). Lys598 bears the N6-acetyllysine; alternate mark. Lys598 is covalently cross-linked (Glycyl lysine isopeptide (Lys-Gly) (interchain with G-Cter in ubiquitin); alternate). A Phosphoserine; by PHK modification is found at Ser602. Lys607 carries the N6-acetyllysine modification. The cysteines at positions 608 and 639 are disulfide-linked. Ser610 bears the Phosphoserine mark. Position 615 is an N6-acetyllysine; alternate (Lys615). Residue Lys615 forms a Glycyl lysine isopeptide (Lys-Gly) (interchain with G-Cter in ubiquitin); alternate linkage. Position 622 is a phosphoserine; by PHK (Ser622). Lys628 is subject to N6,N6-dimethyllysine; alternate. N6-acetyllysine; alternate occurs at positions 628, 634, and 638. A Glycyl lysine isopeptide (Lys-Gly) (interchain with G-Cter in ubiquitin); in PHF-tau cross-link involves residue Lys628. Glycyl lysine isopeptide (Lys-Gly) (interchain with G-Cter in ubiquitin); alternate cross-links involve residues Lys634 and Lys638. Position 641 is a phosphoserine (Ser641). Lys648, Lys660, and Lys664 each carry N6-acetyllysine; alternate. Residues Lys648, Lys660, and Lys664 each participate in a glycyl lysine isopeptide (Lys-Gly) (interchain with G-Cter in ubiquitin); alternate cross-link. A glycan (N-linked (Glc) (glycation) lysine; in PHF-tau; in vitro) is linked at Lys664. Arg666 carries the post-translational modification Omega-N-methylarginine. Position 669 is a phosphoserine; by PHK (Ser669). N-linked (Glc) (glycation) lysine; in PHF-tau; in vitro glycosylation occurs at Lys670. A Glycyl lysine isopeptide (Lys-Gly) (interchain with G-Cter in ubiquitin); in PHF-tau cross-link involves residue Lys670. Ser673 carries the post-translational modification Phosphoserine. N-linked (Glc) (glycation) lysine; in PHF-tau; in vitro glycosylation is present at Lys686. An N6-acetyllysine; alternate modification is found at Lys686. Lys686 participates in a covalent cross-link: Glycyl lysine isopeptide (Lys-Gly) (interchain with G-Cter in ubiquitin); alternate. Residue Lys692 forms a Glycyl lysine isopeptide (Lys-Gly) (interchain with G-Cter in ubiquitin) linkage. Lys702 bears the N6-acetyllysine; alternate mark. A Glycyl lysine isopeptide (Lys-Gly) (interchain with G-Cter in ubiquitin); alternate cross-link involves residue Lys702. Position 711 is a phosphotyrosine (Tyr711). Residue Ser713 is modified to Phosphoserine; by CK1 and PDPK1. A disordered region spans residues 715-734; it reads VVSGDTSPRHLSNVSSTGSI. Position 717 is a phosphoserine; alternate (Ser717). O-linked (GlcNAc) serine; alternate glycosylation is present at Ser717. Positions 718 to 733 are enriched in polar residues; the sequence is GDTSPRHLSNVSSTGS. At Thr720 the chain carries Phosphothreonine. Phosphoserine; by CK1 and PDPK1 is present on Ser721. A Phosphoserine modification is found at Ser726. Ser733 is subject to Phosphoserine; by CaMK2 and TTBK1. At Ser739 the chain carries Phosphoserine; by PDPK1 and TTBK1. Residue Thr744 is modified to Phosphothreonine; by TTBK1.

In terms of assembly, interacts with MARK1, MARK2, MARK3 and MARK4. Interacts with PSMC2 through SQSTM1. Interacts with SQSTM1 when polyubiquitinated. Interacts with FKBP4. Binds to CSNK1D. Interacts with SGK1. Interacts with EPM2A; the interaction dephosphorylates MAPT at Ser-396. Interacts with PIN1. Interacts with LRRK2. Interacts with LRP1, leading to endocytosis; this interaction is reduced in the presence of LRPAP1/RAP. Phosphorylation at serine and threonine residues in S-P or T-P motifs by proline-directed protein kinases (PDPK1, CDK1, CDK5, GSK3, MAPK) (only 2-3 sites per protein in interphase, seven-fold increase in mitosis, and in the form associated with paired helical filaments (PHF-tau)), and at serine residues in K-X-G-S motifs by MAP/microtubule affinity-regulating kinase (MARK1, MARK2, MARK3 or MARK4), causing detachment from microtubules, and their disassembly. Phosphorylation decreases with age. Phosphorylation within tau/MAP's repeat domain or in flanking regions seems to reduce tau/MAP's interaction with, respectively, microtubules or plasma membrane components. Phosphorylation on Ser-610, Ser-622, Ser-641 and Ser-673 in several isoforms during mitosis. Phosphorylation at Ser-548 by GSK3B reduces ability to bind and stabilize microtubules. Phosphorylation at Ser-579 by BRSK1 and BRSK2 in neurons affects ability to bind microtubules and plays a role in neuron polarization. Phosphorylated at Ser-554, Ser-579, Ser-602, Ser-606 and Ser-669 by PHK. Phosphorylation at Ser-214 by SGK1 mediates microtubule depolymerization and neurite formation in hippocampal neurons. There is a reciprocal down-regulation of phosphorylation and O-GlcNAcylation. Phosphorylation on Ser-717 completely abolishes the O-GlcNAcylation on this site, while phosphorylation on Ser-713 and Ser-721 reduces glycosylation by a factor of 2 and 4 respectively. Phosphorylation on Ser-721 is reduced by about 41.5% by GlcNAcylation on Ser-717. Dephosphorylated at several serine and threonine residues by the serine/threonine phosphatase PPP5C. In terms of processing, polyubiquitinated. Requires functional TRAF6 and may provoke SQSTM1-dependent degradation by the proteasome. PHF-tau can be modified by three different forms of polyubiquitination. 'Lys-48'-linked polyubiquitination is the major form, 'Lys-6'-linked and 'Lys-11'-linked polyubiquitination also occur. Post-translationally, O-glycosylated. O-GlcNAcylation content is around 8.2%. There is reciprocal down-regulation of phosphorylation and O-GlcNAcylation. Phosphorylation on Ser-717 completely abolishes the O-GlcNAcylation on this site, while phosphorylation on Ser-713 and Ser-721 reduces O-GlcNAcylation by a factor of 2 and 4 respectively. O-GlcNAcylation on Ser-717 decreases the phosphorylation on Ser-721 by about 41.5%. Glycation of PHF-tau, but not normal brain TAU/MAPT. Glycation is a non-enzymatic post-translational modification that involves a covalent linkage between a sugar and an amino group of a protein molecule forming ketoamine. Subsequent oxidation, fragmentation and/or cross-linking of ketoamine leads to the production of advanced glycation endproducts (AGES). Glycation may play a role in stabilizing PHF aggregation leading to tangle formation in AD. Expressed in neurons. Isoform PNS-tau is expressed in the peripheral nervous system while the others are expressed in the central nervous system.

The protein resides in the cytoplasm. The protein localises to the cytosol. Its subcellular location is the cell membrane. It is found in the cytoskeleton. It localises to the cell projection. The protein resides in the axon. The protein localises to the dendrite. Its subcellular location is the secreted. Promotes microtubule assembly and stability, and might be involved in the establishment and maintenance of neuronal polarity. The C-terminus binds axonal microtubules while the N-terminus binds neural plasma membrane components, suggesting that tau functions as a linker protein between both. Axonal polarity is predetermined by TAU/MAPT localization (in the neuronal cell) in the domain of the cell body defined by the centrosome. The short isoforms allow plasticity of the cytoskeleton whereas the longer isoforms may preferentially play a role in its stabilization. The polypeptide is Microtubule-associated protein tau (Homo sapiens (Human)).